The sequence spans 351 residues: uncharacterized protein (351 aa).

Mn(2+)-binding residues include D215, D226, H290, E319, and E333.

It belongs to the peptidase M24B family. It depends on Mn(2+) as a cofactor.

This is an uncharacterized protein from Staphylococcus aureus (strain MW2).